The primary structure comprises 465 residues: GDNF family receptor alpha-1 (465 aa).

An N-terminal signal peptide occupies residues 1-24; it reads MFLATLYFALPLLDLLLSAEVSGG. Repeat copies occupy residues 25-113, 150-238, and 239-342. A disulfide bridge connects residues C36 and C42. N59 carries an N-linked (GlcNAc...) asparagine glycan. Disulfide bonds link C154–C214, C161–C167, C178–C192, C187–C233, C216–C221, C243–C313, C250–C256, C267–C285, C277–C337, and C315–C325. N347 and N406 each carry an N-linked (GlcNAc...) asparagine glycan. S429 carries GPI-anchor amidated serine lipidation. Positions 430–465 are cleaved as a propeptide — removed in mature form; it reads HITTKSMAAPPSCGLSPLLVLVVTALSTLLSLTETS.

This sequence belongs to the GDNFR family. In terms of assembly, interacts with GDNF ligand and RET: forms a 2:2:2 ternary complex composed of GDNF ligand, GFRA1 and RET receptor. Interacts with SORL1, either alone or in complex with GDNF. Interaction between SORL1 and GFRA1 leads to GFRA1 internalization, but not degradation.

It localises to the cell membrane. It is found in the golgi apparatus. Its subcellular location is the trans-Golgi network. The protein localises to the endosome. The protein resides in the multivesicular body. Coreceptor for GDNF, a neurotrophic factor that enhances survival and morphological differentiation of dopaminergic neurons and increases their high-affinity dopamine uptake. GDNF-binding leads to autophosphorylation and activation of the RET receptor. This chain is GDNF family receptor alpha-1 (GFRA1), found in Homo sapiens (Human).